A 137-amino-acid polypeptide reads, in one-letter code: ATP synthase epsilon chain, sodium ion specific (137 aa).

The protein belongs to the ATPase epsilon chain family. As to quaternary structure, F-type ATPases have 2 components, CF(1) - the catalytic core - and CF(0) - the membrane proton channel. CF(1) has five subunits: alpha(3), beta(3), gamma(1), delta(1), epsilon(1). CF(0) has three main subunits: a, b and c.

Its subcellular location is the cell inner membrane. Produces ATP from ADP in the presence of a sodium gradient across the membrane. This is ATP synthase epsilon chain, sodium ion specific (atpC) from Propionigenium modestum.